The chain runs to 1220 residues: MAIDVNKFESMQIALASPDKIRSWSYGEVKKPETINYRTLKPEKDGLFDERIFGPTKDYECACGKYKRIRYKGIVCDRCGVEVTSSKVRRERMGHIELAAPVTHIWYFKGIPSRMGLVLDMSPRSLEEIIYFASYVVIEPGDAPVEKKQMMTEREYRQLKKEYGAGFKAGMGAEAIKELLANVDLATEADELKRELQEATGQKRVRAVRRLDIIEAFLQSDNKPEWMVMEVIPVIPPDLRPMVQLEGGRFATSDLNDLYRRVINRNNRLKRLLDLNAPGIIVQNEKRMLQEAVDALIDNGRRGRPVAGPGNRPLKSLSHMLKGKQGRFRQNLLGKRVDYSGRSVIDVGPFLKMNQMGLPVPMAIELFRPFIMKELTTRKLAGNVKSAKRKIDKADGDVMDVLEDVIKEHPVLLNRAPTLHRLGIQAFEPVLVSGKAMRLHPLVTEAYNADFDGDQMAIHVPLSDEAQAEARLLMLAAGHILAPKDGKPIVAPSQDMVIGNYYLTTEEAGREGEGMIFSSVDEARIAFASKVVHYHTRVGIQTSSFPSEKPFTDEQRSKIMITSVGKLFFNEILPSDFPYINEPSEDNFKRVDDSFFIDAGENIHDYLADTSIVNPFKKGFLSDIIAEVYKRYKVTETSLLLDRMKDLGYDKSTESGLTVSMTDVLELEEKPAILEDAHSQVATVTKQFRRGLITDSERYQRVTEIWTKAKDIIQDKLIESFEPTNPIFMMQDSGARGNISNFVQLAGMRGLMAGPGGKIIELPVTANFREGLTVMEMFISTHGARKGMSDTALKTANSGYLTRRLVDVAQDVIVREFDNDSDRGVAVQAIMDGTSVVEPLYDRILGRYAMKSVFDPETDEKIVSRNEMIDEDVAKKIVNAGIKEVTIRSVFTSTTEHGVSVLDYGRNLASGEEVEVGEAVGTVAAQSIGEPGTQLTMRNFHTGGVAGGNDITQGLPRVQEIVEARIPKGRAEISEVTGTITVIEENPADRTKSVTIEGETDTRTYTLPLTTRMRFGEGDEIKRGEAINEGPIDPKELLAVTDTLTTESYMLTEIQKVYRLQGIEVSDKHIEVMIRQMLRKIRVMDPGQTDLLPGTLMDIADFKRANEPALFEGLVPATARPVLLGITKAALETNSFLSAASFQETTRVLTDAAIRGKNDPLVGLKENVIIGKIIPAGTGMAEYRKIKSKVVGDVIAQPESESEEASDIPKLDDVAKTFDN.

Residues Cys-61, Cys-63, Cys-76, and Cys-79 each coordinate Zn(2+). Positions 450, 452, and 454 each coordinate Mg(2+). Residues 1197-1220 (QPESESEEASDIPKLDDVAKTFDN) form a disordered region. Over residues 1207–1220 (DIPKLDDVAKTFDN) the composition is skewed to basic and acidic residues.

It belongs to the RNA polymerase beta' chain family. In terms of assembly, the RNAP catalytic core consists of 2 alpha, 1 beta, 1 beta' and 1 omega subunit. When a sigma factor is associated with the core the holoenzyme is formed, which can initiate transcription. Mg(2+) is required as a cofactor. Requires Zn(2+) as cofactor.

The catalysed reaction is RNA(n) + a ribonucleoside 5'-triphosphate = RNA(n+1) + diphosphate. Its function is as follows. DNA-dependent RNA polymerase catalyzes the transcription of DNA into RNA using the four ribonucleoside triphosphates as substrates. This is DNA-directed RNA polymerase subunit beta' from Leuconostoc mesenteroides subsp. mesenteroides (strain ATCC 8293 / DSM 20343 / BCRC 11652 / CCM 1803 / JCM 6124 / NCDO 523 / NBRC 100496 / NCIMB 8023 / NCTC 12954 / NRRL B-1118 / 37Y).